A 255-amino-acid polypeptide reads, in one-letter code: Small ribosomal subunit protein eS1 (255 aa).

Basic residues predominate over residues 1–18 (MAVGKNKRLSKGKKGLKK). Residues 1-28 (MAVGKNKRLSKGKKGLKKRTQDPFSRKD) form a disordered region. Alanine 2 bears the N-acetylalanine; partial mark. Residues 19–28 (RTQDPFSRKD) show a composition bias toward basic and acidic residues.

This sequence belongs to the eukaryotic ribosomal protein eS1 family. In terms of assembly, component of the small ribosomal subunit. Mature ribosomes consist of a small (40S) and a large (60S) subunit. The 40S subunit contains about 33 different proteins and 1 molecule of RNA (18S). The 60S subunit contains about 49 different proteins and 3 molecules of RNA (25S, 5.8S and 5S).

Its subcellular location is the cytoplasm. The chain is Small ribosomal subunit protein eS1 from Ajellomyces capsulatus (strain NAm1 / WU24) (Darling's disease fungus).